Here is a 361-residue protein sequence, read N- to C-terminus: Peptide chain release factor 1 (361 aa).

The residue at position 237 (Gln237) is an N5-methylglutamine. A compositionally biased stretch (basic and acidic residues) spans 287–297; that stretch reads KQQKEQSDTRK. Residues 287–313 are disordered; it reads KQQKEQSDTRKSLVGSGDRSERIRTYN.

Belongs to the prokaryotic/mitochondrial release factor family. Methylated by PrmC. Methylation increases the termination efficiency of RF1.

It is found in the cytoplasm. Its function is as follows. Peptide chain release factor 1 directs the termination of translation in response to the peptide chain termination codons UAG and UAA. The chain is Peptide chain release factor 1 from Francisella tularensis subsp. holarctica (strain FTNF002-00 / FTA).